Here is a 212-residue protein sequence, read N- to C-terminus: Ribonuclease HII (212 aa).

The 206-residue stretch at 1 to 206 (MILVGIDEAG…LQDIAPNYYI (206 aa)) folds into the RNase H type-2 domain. A divalent metal cation-binding residues include Asp-7, Glu-8, and Asp-104.

This sequence belongs to the RNase HII family. Requires Mn(2+) as cofactor. Mg(2+) is required as a cofactor.

It localises to the cytoplasm. It catalyses the reaction Endonucleolytic cleavage to 5'-phosphomonoester.. In terms of biological role, endonuclease that specifically degrades the RNA of RNA-DNA hybrids. This chain is Ribonuclease HII, found in Sulfolobus acidocaldarius (strain ATCC 33909 / DSM 639 / JCM 8929 / NBRC 15157 / NCIMB 11770).